The sequence spans 424 residues: Adenylyltransferase and sulfurtransferase UBA4 (424 aa).

ATP contacts are provided by residues Gly-76, Asp-97, 104 to 108 (TNLHR), Lys-121, and 165 to 166 (DS). 2 residues coordinate Zn(2+): Cys-206 and Cys-209. The active-site Glycyl thioester intermediate; for adenylyltransferase activity is the Cys-223. Cys-283 serves as a coordination point for Zn(2+). Residues 326-422 (RNSDHVLLDV…WYSEVDQNIP (97 aa)) form the Rhodanese domain. The Cysteine persulfide intermediate; for sulfurtransferase activity role is filled by Cys-382.

It in the N-terminal section; belongs to the HesA/MoeB/ThiF family. UBA4 subfamily. Requires Zn(2+) as cofactor.

It localises to the cytoplasm. The protein localises to the cytosol. The protein operates within tRNA modification; 5-methoxycarbonylmethyl-2-thiouridine-tRNA biosynthesis. Functionally, plays a central role in 2-thiolation of mcm(5)S(2)U at tRNA wobble positions of cytosolic tRNA(Lys), tRNA(Glu) and tRNA(Gln). Acts by mediating the C-terminal thiocarboxylation of sulfur carrier URM1. Its N-terminus first activates URM1 as acyl-adenylate (-COAMP), then the persulfide sulfur on the catalytic cysteine is transferred to URM1 to form thiocarboxylation (-COSH) of its C-terminus. The reaction probably involves hydrogen sulfide that is generated from the persulfide intermediate and that acts as a nucleophile towards URM1. Subsequently, a transient disulfide bond is formed. Does not use thiosulfate as sulfur donor; NFS1 probably acting as a sulfur donor for thiocarboxylation reactions. Prior mcm(5) tRNA modification by the elongator complex is required for 2-thiolation. May also be involved in protein urmylation. This is Adenylyltransferase and sulfurtransferase UBA4 from Meyerozyma guilliermondii (strain ATCC 6260 / CBS 566 / DSM 6381 / JCM 1539 / NBRC 10279 / NRRL Y-324) (Yeast).